The primary structure comprises 187 residues: Early nodulin-55-2 (187 aa).

The signal sequence occupies residues 1-26; sequence MASCLPNASPFLVMLAMCLLISTSEA. One can recognise a Phytocyanin domain in the interval 27–132; sequence EKYVVGGSEK…GLKLAVLVIS (106 aa). N-linked (GlcNAc...) asparagine glycosylation is found at Asn78, Asn116, and Asn134. Cys85 and Cys120 form a disulfide bridge. The interval 138-167 is disordered; that stretch reads KNLLSPSPSPSPPPSSLLSPSPSPLPNNQG. The span at 144 to 162 shows a compositional bias: pro residues; it reads SPSPSPPPSSLLSPSPSPL.

Belongs to the early nodulin-like (ENODL) family.

It localises to the symbiosome. It is found in the peribacteroid membrane. In terms of biological role, may act as a carbohydrate transporter. This is Early nodulin-55-2 from Glycine max (Soybean).